Consider the following 169-residue polypeptide: Small ribosomal subunit protein uS13m (169 aa).

The tract at residues 149–169 (KKLQEKKNKEQKKSQKCKTKK) is disordered. The segment covering 150–161 (KLQEKKNKEQKK) has biased composition (basic and acidic residues).

It belongs to the universal ribosomal protein uS13 family. In terms of assembly, part of the small ribosomal subunit.

The protein resides in the mitochondrion. Functionally, located at the top of the head of the small subunit, it contacts several helices of the small subunit rRNA. The polypeptide is Small ribosomal subunit protein uS13m (mrps13) (Dictyostelium discoideum (Social amoeba)).